The primary structure comprises 330 residues: Ketol-acid reductoisomerase (NADP(+)) (330 aa).

The 181-residue stretch at 1-181 (MNVYYEQDAD…GGAKAGVIET (181 aa)) folds into the KARI N-terminal Rossmann domain. NADP(+)-binding positions include 24–27 (YGSQ), Arg-47, Ser-50, Ser-52, and 82–85 (DQYQ). The active site involves His-107. Position 133 (Gly-133) interacts with NADP(+). The KARI C-terminal knotted domain occupies 182–327 (TIKNETETDL…AKLRNMMSWL (146 aa)). Residues Asp-190, Glu-194, Glu-226, and Glu-230 each contribute to the Mg(2+) site. Ser-251 provides a ligand contact to substrate.

Belongs to the ketol-acid reductoisomerase family. The cofactor is Mg(2+).

It catalyses the reaction (2R)-2,3-dihydroxy-3-methylbutanoate + NADP(+) = (2S)-2-acetolactate + NADPH + H(+). The catalysed reaction is (2R,3R)-2,3-dihydroxy-3-methylpentanoate + NADP(+) = (S)-2-ethyl-2-hydroxy-3-oxobutanoate + NADPH + H(+). Its pathway is amino-acid biosynthesis; L-isoleucine biosynthesis; L-isoleucine from 2-oxobutanoate: step 2/4. The protein operates within amino-acid biosynthesis; L-valine biosynthesis; L-valine from pyruvate: step 2/4. Functionally, involved in the biosynthesis of branched-chain amino acids (BCAA). Catalyzes an alkyl-migration followed by a ketol-acid reduction of (S)-2-acetolactate (S2AL) to yield (R)-2,3-dihydroxy-isovalerate. In the isomerase reaction, S2AL is rearranged via a Mg-dependent methyl migration to produce 3-hydroxy-3-methyl-2-ketobutyrate (HMKB). In the reductase reaction, this 2-ketoacid undergoes a metal-dependent reduction by NADPH to yield (R)-2,3-dihydroxy-isovalerate. This is Ketol-acid reductoisomerase (NADP(+)) from Chlorobium phaeovibrioides (strain DSM 265 / 1930) (Prosthecochloris vibrioformis (strain DSM 265)).